We begin with the raw amino-acid sequence, 880 residues long: Leucine--tRNA ligase (880 aa).

Positions 46–56 (PYPSGALHMGH) match the 'HIGH' region motif. The 'KMSKS' region motif lies at 638–642 (KMSKS). Lysine 641 provides a ligand contact to ATP.

Belongs to the class-I aminoacyl-tRNA synthetase family.

It localises to the cytoplasm. The catalysed reaction is tRNA(Leu) + L-leucine + ATP = L-leucyl-tRNA(Leu) + AMP + diphosphate. This Xanthomonas axonopodis pv. citri (strain 306) protein is Leucine--tRNA ligase.